A 207-amino-acid chain; its full sequence is Elongation factor 1-beta (207 aa).

An N-acetylalanine modification is found at alanine 2. Residues 70 to 96 (FPGIPTSASKEEDDDVDLFGSDEEDEE) form a disordered region. Over residues 80 to 96 (EEDDDVDLFGSDEEDEE) the composition is skewed to acidic residues. Serine 90 carries the post-translational modification Phosphoserine; by CK2.

It belongs to the EF-1-beta/EF-1-delta family. EF-1 is composed of 4 subunits: alpha, beta, delta, and gamma. Post-translationally, phosphorylation affects the GDP/GTP exchange rate.

Functionally, EF-1-beta and EF-1-delta stimulate the exchange of GDP bound to EF-1-alpha to GTP. This chain is Elongation factor 1-beta, found in Artemia salina (Brine shrimp).